The sequence spans 185 residues: 3-hexulose-6-phosphate isomerase (185 aa).

Residues 29–172 (LADHILSSHQ…ILKLMEKKGL (144 aa)) form the SIS domain. Substrate is bound by residues serine 47 and 86 to 91 (SGSGET). Glutamate 152 serves as the catalytic Proton acceptor.

This sequence belongs to the SIS family. PHI subfamily. As to quaternary structure, homotetramer.

The catalysed reaction is D-arabino-hex-3-ulose 6-phosphate = beta-D-fructose 6-phosphate. The protein operates within one-carbon metabolism; formaldehyde assimilation via RuMP pathway; D-fructose 6-phosphate from D-ribulose 5-phosphate and formaldehyde: step 2/2. Its function is as follows. Catalyzes the isomerization between 3-hexulose 6-phosphate and fructose 6-phosphate. Together with HxlA, may act as a formaldehyde detoxification system. The sequence is that of 3-hexulose-6-phosphate isomerase (hxlB) from Bacillus subtilis (strain 168).